A 118-amino-acid chain; its full sequence is Large ribosomal subunit protein bL20 (118 aa).

Belongs to the bacterial ribosomal protein bL20 family.

Functionally, binds directly to 23S ribosomal RNA and is necessary for the in vitro assembly process of the 50S ribosomal subunit. It is not involved in the protein synthesizing functions of that subunit. The chain is Large ribosomal subunit protein bL20 from Synechococcus sp. (strain JA-2-3B'a(2-13)) (Cyanobacteria bacterium Yellowstone B-Prime).